The chain runs to 521 residues: GMP synthase [glutamine-hydrolyzing] (521 aa).

Residues 5 to 197 (KILILDFGSQ…VLDICGAQPG (193 aa)) form the Glutamine amidotransferase type-1 domain. C81 (nucleophile) is an active-site residue. Residues H171 and E173 contribute to the active site. One can recognise a GMPS ATP-PPase domain in the interval 198–390 (WTMPNYIEEA…LGLPREMVYR (193 aa)). 225 to 231 (SGGVDSS) contacts ATP.

In terms of assembly, homodimer.

The enzyme catalyses XMP + L-glutamine + ATP + H2O = GMP + L-glutamate + AMP + diphosphate + 2 H(+). It functions in the pathway purine metabolism; GMP biosynthesis; GMP from XMP (L-Gln route): step 1/1. Functionally, catalyzes the synthesis of GMP from XMP. The polypeptide is GMP synthase [glutamine-hydrolyzing] (Neisseria gonorrhoeae (strain ATCC 700825 / FA 1090)).